The sequence spans 310 residues: UDP-N-acetylenolpyruvoylglucosamine reductase (310 aa).

Residues 35-203 (RAGGAAEALV…TRVRFALRKG (169 aa)) form the FAD-binding PCMH-type domain. Residue Arg-183 is part of the active site. Ser-232 serves as the catalytic Proton donor. Glu-302 is an active-site residue.

It belongs to the MurB family. FAD serves as cofactor.

The protein localises to the cytoplasm. The catalysed reaction is UDP-N-acetyl-alpha-D-muramate + NADP(+) = UDP-N-acetyl-3-O-(1-carboxyvinyl)-alpha-D-glucosamine + NADPH + H(+). It participates in cell wall biogenesis; peptidoglycan biosynthesis. Cell wall formation. The protein is UDP-N-acetylenolpyruvoylglucosamine reductase of Myxococcus xanthus (strain DK1622).